Here is an 830-residue protein sequence, read N- to C-terminus: WD repeat-containing protein 75 (830 aa).

WD repeat units follow at residues 4-43 (EENI…KVYS), 47-86 (EECV…KLWD), 90-131 (GILI…QLVS), 145-184 (KELS…YFFK), 193-231 (LSSS…RLWR), 237-276 (KKYT…VEWR), 279-318 (TEKN…IIIH), 324-362 (SAVI…QFYS), and 376-423 (QQEY…KLWM). Residue lysine 123 forms a Glycyl lysine isopeptide (Lys-Gly) (interchain with G-Cter in SUMO2) linkage. Residue lysine 427 forms a Glycyl lysine isopeptide (Lys-Gly) (interchain with G-Cter in SUMO2) linkage. WD repeat units follow at residues 430-474 (GFIL…KVWI), 487-525 (GWTC…TIWD), 529-569 (WELK…CCWN), and 574-611 (ALEW…FVFK). Position 466 is an N6-acetyllysine (lysine 466). Phosphoserine occurs at positions 664 and 672. Lysine 676 is covalently cross-linked (Glycyl lysine isopeptide (Lys-Gly) (interchain with G-Cter in SUMO2)). Residues 763–806 (SAKEIPEDVDMEEEKESEDSDEENDFTEKVQDTSNTGLGEDIIH) are disordered. Residues 769-787 (EDVDMEEEKESEDSDEEND) show a composition bias toward acidic residues. A phosphoserine mark is found at serine 779, serine 782, serine 796, and serine 811.

As to quaternary structure, component of the proposed t-UTP subcomplex of the ribosomal small subunit (SSU) processome. SSU processome is composed of more than 70 proteins and the RNA chaperone small nucleolar RNA (snoRNA) U3.

It localises to the nucleus. The protein localises to the nucleolus. Ribosome biogenesis factor. Part of the small subunit (SSU) processome, first precursor of the small eukaryotic ribosomal subunit. During the assembly of the SSU processome in the nucleolus, many ribosome biogenesis factors, an RNA chaperone and ribosomal proteins associate with the nascent pre-rRNA and work in concert to generate RNA folding, modifications, rearrangements and cleavage as well as targeted degradation of pre-ribosomal RNA by the RNA exosome. Involved in nucleolar processing of pre-18S ribosomal RNA. Required for optimal pre-ribosomal RNA transcription by RNA polymerase I. The protein is WD repeat-containing protein 75 of Homo sapiens (Human).